We begin with the raw amino-acid sequence, 224 residues long: Golgi to ER traffic protein 1 (224 aa).

At 1–33 (MDEAIIVDAEFVAPVGTTAGEFVPIDRAPAAGL) the chain is on the lumenal side. Residues 34–53 (LLLVAFVVLYAKVISKLGKP) traverse the membrane as a helical segment. The Cytoplasmic segment spans residues 54–137 (AIQEFLWEII…RFFTIISSAI (84 aa)). Residues 102 to 124 (AKLDREYGKLKVEIEDINNLLTA) adopt a coiled-coil conformation. The helical transmembrane segment at 138–158 (FLSTTGMKMFLRIKHRKAAIF) threads the bilayer. The Lumenal segment spans residues 159–182 (WLPKNAFPYPIEYILSFSSAPLGS). A helical membrane pass occupies residues 183–199 (VSVSAWLMICDAAMDLI). Residues 200-224 (VTIFVALVVGVIGMLRSNKVKPKTA) lie on the Cytoplasmic side of the membrane.

This sequence belongs to the WRB/GET1 family. Component of the Golgi to ER traffic (GET) complex, which is composed of GET1, GET2 and GET3. Within the complex, GET1 and GET2 form a heterotetramer which is stabilized by phosphatidylinositol binding and which binds to the GET3 homodimer.

It localises to the endoplasmic reticulum membrane. The protein resides in the golgi apparatus membrane. In terms of biological role, required for the post-translational delivery of tail-anchored (TA) proteins to the endoplasmic reticulum. Together with GET2, acts as a membrane receptor for soluble GET3, which recognizes and selectively binds the transmembrane domain of TA proteins in the cytosol. The GET complex cooperates with the HDEL receptor ERD2 to mediate the ATP-dependent retrieval of resident ER proteins that contain a C-terminal H-D-E-L retention signal from the Golgi to the ER. The chain is Golgi to ER traffic protein 1 from Yarrowia lipolytica (strain CLIB 122 / E 150) (Yeast).